Consider the following 341-residue polypeptide: Methionine import ATP-binding protein MetN (341 aa).

One can recognise an ABC transporter domain in the interval 2–241 (INLQDVSKVY…PKEQMTKRFV (240 aa)). Position 38-45 (38-45 (GYSGAGKS)) interacts with ATP.

It belongs to the ABC transporter superfamily. Methionine importer (TC 3.A.1.24) family. The complex is composed of two ATP-binding proteins (MetN), two transmembrane proteins (MetP) and a solute-binding protein (MetQ).

The protein localises to the cell membrane. The catalysed reaction is L-methionine(out) + ATP + H2O = L-methionine(in) + ADP + phosphate + H(+). It carries out the reaction D-methionine(out) + ATP + H2O = D-methionine(in) + ADP + phosphate + H(+). Its function is as follows. Part of the ABC transporter complex MetNPQ involved in methionine import. Responsible for energy coupling to the transport system. It has also been shown to be involved in methionine sulfoxide transport. The sequence is that of Methionine import ATP-binding protein MetN from Bacillus subtilis (strain 168).